Reading from the N-terminus, the 242-residue chain is Triosephosphate isomerase (242 aa).

9-11 (NWK) lines the substrate pocket. The Electrophile role is filled by His90. Residue Glu162 is the Proton acceptor of the active site. Substrate-binding positions include Gly168, Ser205, and 226 to 227 (GG).

The protein belongs to the triosephosphate isomerase family. Homodimer.

It localises to the cytoplasm. It catalyses the reaction D-glyceraldehyde 3-phosphate = dihydroxyacetone phosphate. Its pathway is carbohydrate biosynthesis; gluconeogenesis. It participates in carbohydrate degradation; glycolysis; D-glyceraldehyde 3-phosphate from glycerone phosphate: step 1/1. Functionally, involved in the gluconeogenesis. Catalyzes stereospecifically the conversion of dihydroxyacetone phosphate (DHAP) to D-glyceraldehyde-3-phosphate (G3P). The protein is Triosephosphate isomerase of Azoarcus sp. (strain BH72).